A 190-amino-acid polypeptide reads, in one-letter code: Selenoprotein S (190 aa).

A helical membrane pass occupies residues 28-48; the sequence is SLLASYGWYILFSCVLLYIVI. The VCP/p97-interacting motif (VIM) stretch occupies residues 78–90; the sequence is RQEALAAARLRMQ. A disordered region spans residues 96–190; it reads QVEKHKEKQR…RRGPSSGGUS (95 aa). Positions 97–118 are enriched in basic and acidic residues; sequence VEKHKEKQRQLEEEKRRQKIEM. The span at 160 to 174 shows a compositional bias: gly residues; the sequence is RGGGYNPLTGEGGGT. Position 189 (selenocysteine 189) is a non-standard amino acid, selenocysteine.

The protein belongs to the selenoprotein S family. In terms of assembly, interacts with DERL1 and (via VIM motif) with VCP, suggesting that it forms a membrane complex with DERL1 that serves as a receptor for VCP. Also interacts with DERL2, DERL3 and SELENOK. The SELENOK-SELENOS complex interacts with VCP. Interacts with CCDC47. Truncated SELENOS proteins produced by failed UGA/Sec decoding are ubiquitinated by the CRL2(KLHDC2) and CRL2(KLHDC3) complexes, which recognizes the glycine (Gly) at the C-terminus of truncated SELENOS proteins. Truncated SELENOS proteins produced by failed UGA/Sec decoding are also ubiquitinated by the CRL5(KLHDC1) complex.

It localises to the endoplasmic reticulum membrane. Its subcellular location is the cytoplasm. Functionally, involved in the degradation process of misfolded endoplasmic reticulum (ER) luminal proteins. Participates in the transfer of misfolded proteins from the ER to the cytosol, where they are destroyed by the proteasome in a ubiquitin-dependent manner. Probably acts by serving as a linker between DERL1, which mediates the retrotranslocation of misfolded proteins into the cytosol, and the ATPase complex VCP, which mediates the translocation and ubiquitination. This Rattus norvegicus (Rat) protein is Selenoprotein S.